We begin with the raw amino-acid sequence, 212 residues long: MNGALGKVLCLKNDTIFKQAFSLLRFRTSGENPVYSAGGILLTTSRHYRSKPTHGIGRYKHLVKPEEPKKKKGKVEIRAINVGTDYEYGTLNIHLIAYDMALTESYAQYVHNLCNHLSIKVEESYAMPTKTMEVLQLQDQGNKMLLDSVLTTHERVVQISGLNATFAEIFLEIIQSNLPEGVKLSVREHTEEDFKGRFKARPELEELLAKLN.

The transit peptide at 1-28 (MNGALGKVLCLKNDTIFKQAFSLLRFRT) directs the protein to the mitochondrion. Lysine 199 is modified (N6-succinyllysine).

The protein belongs to the mitochondrion-specific ribosomal protein mL48 family. As to quaternary structure, component of the mitochondrial ribosome large subunit (39S) which comprises a 16S rRNA and about 50 distinct proteins. Interacts with OXA1L.

It is found in the mitochondrion. This Bos taurus (Bovine) protein is Large ribosomal subunit protein mL48 (MRPL48).